Consider the following 475-residue polypeptide: Sulfate adenylyltransferase subunit 1 (475 aa).

A tr-type G domain is found at 25 to 239; sequence KSLLRFLTCG…EVLETVEIQR (215 aa). Positions 34 to 41 are G1; the sequence is GSVDDGKS. Position 34–41 (34–41) interacts with GTP; sequence GSVDDGKS. The tract at residues 92-96 is G2; that stretch reads GITID. The interval 113 to 116 is G3; it reads DTPG. Residues 113-117 and 168-171 contribute to the GTP site; these read DTPGH and NKMD. The G4 stretch occupies residues 168 to 171; sequence NKMD. Residues 206-208 are G5; the sequence is SAL.

It belongs to the TRAFAC class translation factor GTPase superfamily. Classic translation factor GTPase family. CysN/NodQ subfamily. As to quaternary structure, heterodimer composed of CysD, the smaller subunit, and CysN.

It catalyses the reaction sulfate + ATP + H(+) = adenosine 5'-phosphosulfate + diphosphate. It functions in the pathway sulfur metabolism; hydrogen sulfide biosynthesis; sulfite from sulfate: step 1/3. In terms of biological role, with CysD forms the ATP sulfurylase (ATPS) that catalyzes the adenylation of sulfate producing adenosine 5'-phosphosulfate (APS) and diphosphate, the first enzymatic step in sulfur assimilation pathway. APS synthesis involves the formation of a high-energy phosphoric-sulfuric acid anhydride bond driven by GTP hydrolysis by CysN coupled to ATP hydrolysis by CysD. The chain is Sulfate adenylyltransferase subunit 1 from Escherichia coli (strain SE11).